We begin with the raw amino-acid sequence, 221 residues long: Cytidylate kinase 1 (221 aa).

Residue 7–15 participates in ATP binding; that stretch reads GPSASGKSS.

The protein belongs to the cytidylate kinase family. Type 1 subfamily.

Its subcellular location is the cytoplasm. It catalyses the reaction CMP + ATP = CDP + ADP. The catalysed reaction is dCMP + ATP = dCDP + ADP. This chain is Cytidylate kinase 1, found in Borreliella burgdorferi (strain ATCC 35210 / DSM 4680 / CIP 102532 / B31) (Borrelia burgdorferi).